The sequence spans 504 residues: Dimethylsulfoniopropionate lyase 5 (504 aa).

This sequence belongs to the aspartate/glutamate racemases family. ALMA1 subfamily. Homotetramer.

It carries out the reaction S,S-dimethyl-beta-propiothetin = acrylate + dimethyl sulfide + H(+). In terms of biological role, mediates cleavage of dimethylsulfoniopropionate (DMSP) into dimethyl sulfide (DMS) and acrylate. DMS is the principal form by which sulfur is transported from oceans to the atmosphere and is a key component of the ocean sulfur cycle. This chain is Dimethylsulfoniopropionate lyase 5, found in Emiliania huxleyi (strain CCMP1516).